Reading from the N-terminus, the 476-residue chain is Probable coniferyl aldehyde dehydrogenase (476 aa).

Residues Glu-225 and Cys-259 contribute to the active site.

This sequence belongs to the aldehyde dehydrogenase family. Homodimer.

The enzyme catalyses (E)-coniferaldehyde + NADP(+) + H2O = (E)-ferulate + NADPH + 2 H(+). The catalysed reaction is (E)-coniferaldehyde + NAD(+) + H2O = (E)-ferulate + NADH + 2 H(+). This Pseudomonas aeruginosa (strain ATCC 15692 / DSM 22644 / CIP 104116 / JCM 14847 / LMG 12228 / 1C / PRS 101 / PAO1) protein is Probable coniferyl aldehyde dehydrogenase (calB).